The following is a 1025-amino-acid chain: Exportin-T (1025 aa).

This sequence belongs to the exportin family.

The protein localises to the nucleus. The protein resides in the cytoplasm. Functionally, tRNA nucleus export receptor which facilitates tRNA translocation across the nuclear pore complex. Involved in pre-tRNA splicing, probably by affecting the interaction of pre-tRNA with splicing endonuclease. In Yarrowia lipolytica (strain CLIB 122 / E 150) (Yeast), this protein is Exportin-T (LOS1).